The primary structure comprises 209 residues: UPF0174 protein HP_1587 (209 aa).

The protein belongs to the UPF0174 family.

This is UPF0174 protein HP_1587 from Helicobacter pylori (strain ATCC 700392 / 26695) (Campylobacter pylori).